Here is a 145-residue protein sequence, read N- to C-terminus: Large-conductance mechanosensitive channel (145 aa).

Helical transmembrane passes span valine 30–methionine 50 and glycine 74–isoleucine 94.

It belongs to the MscL family. In terms of assembly, homopentamer.

The protein resides in the cell inner membrane. Its function is as follows. Channel that opens in response to stretch forces in the membrane lipid bilayer. May participate in the regulation of osmotic pressure changes within the cell. This chain is Large-conductance mechanosensitive channel, found in Synechocystis sp. (strain ATCC 27184 / PCC 6803 / Kazusa).